The following is a 60-amino-acid chain: Large ribosomal subunit protein uL30 (60 aa).

Belongs to the universal ribosomal protein uL30 family. In terms of assembly, part of the 50S ribosomal subunit.

The sequence is that of Large ribosomal subunit protein uL30 from Shewanella baltica (strain OS223).